Consider the following 70-residue polypeptide: Brevinin-1Vb (70 aa).

An N-terminal signal peptide occupies residues methionine 1 to cysteine 22. Residues glutamate 23–glutamate 44 constitute a propeptide that is removed on maturation. Cysteine 64 and cysteine 70 are disulfide-bonded.

In terms of tissue distribution, expressed by the skin glands.

It is found in the secreted. Antimicrobial peptide. This chain is Brevinin-1Vb, found in Odorrana versabilis (Chinese bamboo leaf odorous frog).